The primary structure comprises 138 residues: Cysteine desulfuration protein SufE (138 aa).

Cys51 acts as the Cysteine persulfide intermediate in catalysis.

The protein belongs to the SufE family. In terms of assembly, homodimer. Interacts with SufS.

Its subcellular location is the cytoplasm. It functions in the pathway cofactor biosynthesis; iron-sulfur cluster biosynthesis. Participates in cysteine desulfuration mediated by SufS. Cysteine desulfuration mobilizes sulfur from L-cysteine to yield L-alanine and constitutes an essential step in sulfur metabolism for biosynthesis of a variety of sulfur-containing biomolecules. Functions as a sulfur acceptor for SufS, by mediating the direct transfer of the sulfur atom from the S-sulfanylcysteine of SufS, an intermediate product of cysteine desulfuration process. The polypeptide is Cysteine desulfuration protein SufE (Escherichia coli O45:K1 (strain S88 / ExPEC)).